The sequence spans 93 residues: Putative sodium channel toxin Ts41 (93 aa).

The first 23 residues, 1–23 (MKIGVLFTIISMLCLLEVRKICS), serve as a signal peptide directing secretion. 4 disulfides stabilise this stretch: Cys22/Cys87, Cys39/Cys62, Cys48/Cys67, and Cys52/Cys69. The region spanning 26–88 (EGGYPRYFSF…FWNVYRKYCK (63 aa)) is the LCN-type CS-alpha/beta domain.

It belongs to the long (4 C-C) scorpion toxin superfamily. As to expression, expressed by the venom gland.

The protein resides in the secreted. Functionally, the edited BmKBTx-like may modulate voltage-gated sodium channels (Nav). The non-edited form is able to form a heterodimer. In orthologs, a heterodimer with LVP beta-chain induces lipolysis in rat adipocytes, which is mediated through the beta-2 adrenergic receptor pathway (ADRB2). Since no LVP beta-chains have been identified in the venom of this scorpion, it is possible that this protein is not involved in a lipolysis process. In Tityus serrulatus (Brazilian scorpion), this protein is Putative sodium channel toxin Ts41.